We begin with the raw amino-acid sequence, 416 residues long: Prostate tumor-overexpressed gene 1 protein (416 aa).

A disordered region spans residues 1–53 (MVRPRRAPYRSGAGGPLGGRGRPPRPLVVRAVRSRSWPASPRGPQPPRIRARS). Gly residues predominate over residues 12–21 (GAGGPLGGRG). Residues 27-36 (LVVRAVRSRS) show a composition bias toward low complexity. A Phosphoserine modification is found at S53. The interaction with FLOT1 stretch occupies residues 184–416 (NGFAGCMLFP…QEQQQRGMGG (233 aa)).

Belongs to the Mediator complex subunit 25 family. PTOV1 subfamily. May interact with CREBBP. Interacts with FLOT1. Ubiquitinated by the CRL2(KLHDC2) complex, which recognizes the diglycine (Gly-Gly) at the C-terminus, leading to its degradation. Ubiquitinated by the CRL2(APPBP2) complex, which recognizes the Arg-Xaa-Xaa-Gly sequence at the C-terminus, leading to its degradation. Expressed in brain, heart, kidney, liver, placenta, skeletal muscle and small intestine.

The protein resides in the cytoplasm. Its subcellular location is the nucleus. It is found in the cell membrane. The protein localises to the perinuclear region. Its function is as follows. May activate transcription. Required for nuclear translocation of FLOT1. Promotes cell proliferation. In Homo sapiens (Human), this protein is Prostate tumor-overexpressed gene 1 protein (PTOV1).